The chain runs to 393 residues: Acetate kinase (393 aa).

Asn10 is a binding site for Mg(2+). An ATP-binding site is contributed by Lys17. Arg89 serves as a coordination point for substrate. Asp146 acts as the Proton donor/acceptor in catalysis. Residues 204–208 (HLGNG), 278–280 (DMR), and 323–327 (GVGEN) contribute to the ATP site. Glu376 contacts Mg(2+).

It belongs to the acetokinase family. As to quaternary structure, homodimer. The cofactor is Mg(2+). Mn(2+) is required as a cofactor.

Its subcellular location is the cytoplasm. The catalysed reaction is acetate + ATP = acetyl phosphate + ADP. It participates in metabolic intermediate biosynthesis; acetyl-CoA biosynthesis; acetyl-CoA from acetate: step 1/2. Its function is as follows. Catalyzes the formation of acetyl phosphate from acetate and ATP. Can also catalyze the reverse reaction. This is Acetate kinase from Mycoplasma genitalium (strain ATCC 33530 / DSM 19775 / NCTC 10195 / G37) (Mycoplasmoides genitalium).